An 882-amino-acid chain; its full sequence is Isoamylase 2, chloroplastic (882 aa).

Residues 1–70 (MAAWSPSVGI…LQSYQFSKIC (70 aa)) constitute a chloroplast transit peptide.

The protein belongs to the glycosyl hydrolase 13 family. Associates with ISA1 to form the heteromultimeric complex Iso1 required for amylopectin synthesis.

The protein resides in the plastid. It localises to the chloroplast. It functions in the pathway glycan biosynthesis; starch biosynthesis. Functionally, involved in the trimming of pre-amylopectin chains. Accelerates the crystallization of nascent amylopectin molecules during starch synthesis. ISA1 and ISA2 work exclusively together as a multimeric holoenzyme. ISA1-ISA2 removes preferentially branches that are very close to other branches. The protein is Isoamylase 2, chloroplastic (ISA2) of Arabidopsis thaliana (Mouse-ear cress).